The primary structure comprises 571 residues: Fumarate reductase (cytochrome) (571 aa).

Residues H8, C14, C17, H18, C36, C39, H40, H52, H58, H61, C68, C71, H72, A74, H75, C82, C85, H86, N91, and Y94 each coordinate heme c. The segment at A118 to N571 is flavoprotein-like. The FAD site is built by A137, E156, N164, A165, A169, G170, G171, G278, and Q338. G170 contacts succinate. Succinate-binding residues include H365, T377, and E378. Positions 377, 378, and 402 each coordinate fumarate. R402 serves as the catalytic Proton donor. Position 431 (K431) interacts with heme c. H504 contributes to the succinate binding site. H504 is a binding site for fumarate. Positions 505 and 534 each coordinate FAD. R544 and G547 together coordinate succinate. Fumarate is bound by residues R544 and G547. Residues A549 and I550 each contribute to the FAD site.

In terms of assembly, monomer. FAD serves as cofactor. Heme c is required as a cofactor.

It localises to the periplasm. The enzyme catalyses 2 Fe(III)-[cytochrome c] + succinate = fumarate + 2 Fe(II)-[cytochrome c] + 2 H(+). Flavocytochrome that catalyzes the reduction of fumarate to succinate. Is essential for fumarate respiration during anaerobic growth, acting as the terminal reductase. Receives electrons from the membrane-bound tetraheme c-type cytochrome CymA. In vitro, can use the artificial electron donor methyl viologen. The polypeptide is Fumarate reductase (cytochrome) (fccA) (Shewanella frigidimarina).